A 272-amino-acid polypeptide reads, in one-letter code: Phosphoglycolate phosphatase (272 aa).

Residue aspartate 19 is the Nucleophile of the active site. Residues aspartate 19, aspartate 21, and aspartate 182 each contribute to the Mg(2+) site.

Belongs to the HAD-like hydrolase superfamily. CbbY/CbbZ/Gph/YieH family. The cofactor is Mg(2+).

It carries out the reaction 2-phosphoglycolate + H2O = glycolate + phosphate. Its pathway is organic acid metabolism; glycolate biosynthesis; glycolate from 2-phosphoglycolate: step 1/1. Specifically catalyzes the dephosphorylation of 2-phosphoglycolate. Is involved in the dissimilation of the intracellular 2-phosphoglycolate formed during the DNA repair of 3'-phosphoglycolate ends, a major class of DNA lesions induced by oxidative stress. This chain is Phosphoglycolate phosphatase, found in Pseudomonas fluorescens (strain Pf0-1).